Consider the following 113-residue polypeptide: Holo-[acyl-carrier-protein] synthase (113 aa).

Residues Asp8 and Glu57 each contribute to the Mg(2+) site.

It belongs to the P-Pant transferase superfamily. AcpS family. Requires Mg(2+) as cofactor.

The protein resides in the cytoplasm. The catalysed reaction is apo-[ACP] + CoA = holo-[ACP] + adenosine 3',5'-bisphosphate + H(+). In terms of biological role, transfers the 4'-phosphopantetheine moiety from coenzyme A to a Ser of acyl-carrier-protein. This Thermodesulfovibrio yellowstonii (strain ATCC 51303 / DSM 11347 / YP87) protein is Holo-[acyl-carrier-protein] synthase.